Consider the following 116-residue polypeptide: Large ribosomal subunit protein uL24 (116 aa).

Belongs to the universal ribosomal protein uL24 family. As to quaternary structure, part of the 50S ribosomal subunit.

Functionally, one of two assembly initiator proteins, it binds directly to the 5'-end of the 23S rRNA, where it nucleates assembly of the 50S subunit. In terms of biological role, located at the polypeptide exit tunnel on the outside of the subunit. This chain is Large ribosomal subunit protein uL24, found in Methanothrix thermoacetophila (strain DSM 6194 / JCM 14653 / NBRC 101360 / PT) (Methanosaeta thermophila).